A 332-amino-acid polypeptide reads, in one-letter code: ADP-L-glycero-D-manno-heptose-6-epimerase (332 aa).

Residues 11–12 (FI), 32–33 (DN), Lys39, Lys54, 76–80 (EGACS), and Asn93 contribute to the NADP(+) site. Catalysis depends on Tyr140, which acts as the Proton acceptor. An NADP(+)-binding site is contributed by Lys144. Residue Asn170 participates in substrate binding. NADP(+)-binding residues include Val171 and Lys179. The active-site Proton acceptor is Lys179. Residues Arg181, His188, 202–205 (FEGS), Arg215, and Tyr294 contribute to the substrate site.

It belongs to the NAD(P)-dependent epimerase/dehydratase family. HldD subfamily. Homopentamer. NADP(+) is required as a cofactor.

The enzyme catalyses ADP-D-glycero-beta-D-manno-heptose = ADP-L-glycero-beta-D-manno-heptose. Its pathway is nucleotide-sugar biosynthesis; ADP-L-glycero-beta-D-manno-heptose biosynthesis; ADP-L-glycero-beta-D-manno-heptose from D-glycero-beta-D-manno-heptose 7-phosphate: step 4/4. In terms of biological role, catalyzes the interconversion between ADP-D-glycero-beta-D-manno-heptose and ADP-L-glycero-beta-D-manno-heptose via an epimerization at carbon 6 of the heptose. This chain is ADP-L-glycero-D-manno-heptose-6-epimerase, found in Dechloromonas aromatica (strain RCB).